We begin with the raw amino-acid sequence, 278 residues long: Elongation factor Ts (278 aa).

Positions 82–85 are involved in Mg(2+) ion dislocation from EF-Tu; that stretch reads TEPV.

This sequence belongs to the EF-Ts family.

The protein localises to the cytoplasm. Functionally, associates with the EF-Tu.GDP complex and induces the exchange of GDP to GTP. It remains bound to the aminoacyl-tRNA.EF-Tu.GTP complex up to the GTP hydrolysis stage on the ribosome. The sequence is that of Elongation factor Ts from Cytophaga hutchinsonii (strain ATCC 33406 / DSM 1761 / CIP 103989 / NBRC 15051 / NCIMB 9469 / D465).